Consider the following 348-residue polypeptide: tRNA N6-adenosine threonylcarbamoyltransferase (348 aa).

The Fe cation site is built by His-116 and His-120. Residues 138–142 (IISGG), Asp-171, Gly-184, and Asn-282 contribute to the substrate site. Residue Asp-310 participates in Fe cation binding.

Belongs to the KAE1 / TsaD family. Requires Fe(2+) as cofactor.

It is found in the cytoplasm. It carries out the reaction L-threonylcarbamoyladenylate + adenosine(37) in tRNA = N(6)-L-threonylcarbamoyladenosine(37) in tRNA + AMP + H(+). Functionally, required for the formation of a threonylcarbamoyl group on adenosine at position 37 (t(6)A37) in tRNAs that read codons beginning with adenine. Is involved in the transfer of the threonylcarbamoyl moiety of threonylcarbamoyl-AMP (TC-AMP) to the N6 group of A37, together with TsaE and TsaB. TsaD likely plays a direct catalytic role in this reaction. The polypeptide is tRNA N6-adenosine threonylcarbamoyltransferase (Ehrlichia ruminantium (strain Welgevonden)).